Consider the following 122-residue polypeptide: MIQMQTCLDVADNSGARQVMCIKVLGGSKRRYANVGDIIKVSVKDAIPRGRVKKGEVYNAVVVRTRKGVRRADGSLIRFDNNAAVILNNQHQPIGTRIFGPVTRELRSEKFMKIISLAPEVL.

It belongs to the universal ribosomal protein uL14 family. As to quaternary structure, part of the 50S ribosomal subunit. Forms a cluster with proteins L3 and L19. In the 70S ribosome, L14 and L19 interact and together make contacts with the 16S rRNA in bridges B5 and B8.

Functionally, binds to 23S rRNA. Forms part of two intersubunit bridges in the 70S ribosome. In Methylococcus capsulatus (strain ATCC 33009 / NCIMB 11132 / Bath), this protein is Large ribosomal subunit protein uL14.